The sequence spans 196 residues: Probable DNA-directed RNA polymerase subunit delta (196 aa).

One can recognise an HTH HARE-type domain in the interval 14–81 (LSMIEVAHEI…GDNVWGLRSW (68 aa)). Acidic residues predominate over residues 119 to 150 (DDDDVIDYDDDDPEDEDLDNDYDDEDDDDDEG). Positions 119–196 (DDDDVIDYDD…DADLDEENQD (78 aa)) are disordered. Over residues 151 to 161 (SHELKQYTKDL) the composition is skewed to basic and acidic residues. Composition is skewed to acidic residues over residues 162–176 (DDID…ELAD) and 186–196 (SDADLDEENQD).

The protein belongs to the RpoE family. In terms of assembly, RNAP is composed of a core of 2 alpha, a beta and a beta' subunits. The core is associated with a delta subunit and one of several sigma factors.

Its function is as follows. Participates in both the initiation and recycling phases of transcription. In the presence of the delta subunit, RNAP displays an increased specificity of transcription, a decreased affinity for nucleic acids, and an increased efficiency of RNA synthesis because of enhanced recycling. The chain is Probable DNA-directed RNA polymerase subunit delta from Ligilactobacillus salivarius (strain UCC118) (Lactobacillus salivarius).